Consider the following 182-residue polypeptide: Ribosome maturation factor RimM (182 aa).

The region spanning 102-182 (EEGDYYWKDL…TIEVDWDPGF (81 aa)) is the PRC barrel domain.

The protein belongs to the RimM family. As to quaternary structure, binds ribosomal protein uS19.

Its subcellular location is the cytoplasm. An accessory protein needed during the final step in the assembly of 30S ribosomal subunit, possibly for assembly of the head region. Essential for efficient processing of 16S rRNA. May be needed both before and after RbfA during the maturation of 16S rRNA. It has affinity for free ribosomal 30S subunits but not for 70S ribosomes. The chain is Ribosome maturation factor RimM from Salmonella enteritidis PT4 (strain P125109).